We begin with the raw amino-acid sequence, 83 residues long: Exodeoxyribonuclease 7 small subunit (83 aa).

Belongs to the XseB family. Heterooligomer composed of large and small subunits.

The protein resides in the cytoplasm. The enzyme catalyses Exonucleolytic cleavage in either 5'- to 3'- or 3'- to 5'-direction to yield nucleoside 5'-phosphates.. Bidirectionally degrades single-stranded DNA into large acid-insoluble oligonucleotides, which are then degraded further into small acid-soluble oligonucleotides. In Rhodopseudomonas palustris (strain ATCC BAA-98 / CGA009), this protein is Exodeoxyribonuclease 7 small subunit.